Reading from the N-terminus, the 852-residue chain is Lon protease homolog 2, peroxisomal (852 aa).

Ser2 carries the post-translational modification N-acetylserine. Residues Leu13–Ile222 enclose the Lon N-terminal domain. Gly375–Thr382 is an ATP binding site. Residues Leu651–Gly837 form the Lon proteolytic domain. Residues Ser743 and Lys786 contribute to the active site. A Microbody targeting signal motif is present at residues Ser850–Leu852.

The protein belongs to the peptidase S16 family. Interacts with PEX5. Interacts with TYSND1. May interact with enzymes involved in beta-oxidation of fatty acids, including ACOX1/AOX.

The protein resides in the peroxisome matrix. The catalysed reaction is Hydrolysis of proteins in presence of ATP.. Functionally, ATP-dependent serine protease that mediates the selective degradation of misfolded and unassembled polypeptides in the peroxisomal matrix. Necessary for type 2 peroxisome targeting signal (PTS2)-containing protein processing and facilitates peroxisome matrix protein import. May indirectly regulate peroxisomal fatty acid beta-oxidation through degradation of the self-processed forms of TYSND1. In Mus musculus (Mouse), this protein is Lon protease homolog 2, peroxisomal (Lonp2).